The chain runs to 159 residues: MIEGVMKEGFITTSYDSVVNWAKTGSLWPMTFGLACCAVEMMHAAAARYDIGRFGSEVFRASPRQSDLMIVAGTLCNKMAPAMRKVYDQMSEPRWVISMGSCANGGGYYHYSYSVVRGCDRIVPVDVYVPGCPPTAEALIYGIIQLQQKIRRTHTIARV.

The [4Fe-4S] cluster site is built by cysteine 36, cysteine 37, cysteine 102, and cysteine 132.

The protein belongs to the complex I 20 kDa subunit family. In terms of assembly, NDH-1 is composed of 14 different subunits. Subunits NuoB, C, D, E, F, and G constitute the peripheral sector of the complex. It depends on [4Fe-4S] cluster as a cofactor.

The protein resides in the cell inner membrane. The enzyme catalyses a quinone + NADH + 5 H(+)(in) = a quinol + NAD(+) + 4 H(+)(out). Functionally, NDH-1 shuttles electrons from NADH, via FMN and iron-sulfur (Fe-S) centers, to quinones in the respiratory chain. Couples the redox reaction to proton translocation (for every two electrons transferred, four hydrogen ions are translocated across the cytoplasmic membrane), and thus conserves the redox energy in a proton gradient. This chain is NADH-quinone oxidoreductase subunit B, found in Delftia acidovorans (strain DSM 14801 / SPH-1).